A 221-amino-acid polypeptide reads, in one-letter code: GTP-binding nuclear protein Ran2 (221 aa).

In terms of domain architecture, Small GTPase Ran-type spans 10–174 (DYPSFKLVIV…LYLARKLAGD (165 aa)). Residue 21-28 (DGGTGKTT) coordinates GTP. Residues 40–48 (KKYEPTIGV) form a switch-I region. GTP is bound by residues Gly71, 125 to 128 (NKVD), and 153 to 155 (SAK). A switch-II region spans residues 71 to 87 (GQEKFGGLRDGYYIHGQ).

Belongs to the small GTPase superfamily. Ran family. As to quaternary structure, found in a nuclear export complex with RanGTP, exportin and pre-miRNA.

The protein localises to the nucleus. Functionally, GTP-binding protein involved in nucleocytoplasmic transport. Required for the import of protein into the nucleus and also for RNA export. Involved in chromatin condensation and control of cell cycle. The protein is GTP-binding nuclear protein Ran2 (RAN2) of Solanum lycopersicum (Tomato).